The chain runs to 341 residues: Anthranilate phosphoribosyltransferase (341 aa).

Residues glycine 80, 83-84 (GD), threonine 88, 90-93 (NIST), 108-116 (KHGNRAMSS), and serine 120 each bind 5-phospho-alpha-D-ribose 1-diphosphate. Glycine 80 serves as a coordination point for anthranilate. Residue serine 92 participates in Mg(2+) binding. Asparagine 111 contacts anthranilate. Position 166 (arginine 166) interacts with anthranilate. Mg(2+)-binding residues include aspartate 225 and glutamate 226.

This sequence belongs to the anthranilate phosphoribosyltransferase family. Homodimer. It depends on Mg(2+) as a cofactor.

The catalysed reaction is N-(5-phospho-beta-D-ribosyl)anthranilate + diphosphate = 5-phospho-alpha-D-ribose 1-diphosphate + anthranilate. It functions in the pathway amino-acid biosynthesis; L-tryptophan biosynthesis; L-tryptophan from chorismate: step 2/5. Its function is as follows. Catalyzes the transfer of the phosphoribosyl group of 5-phosphorylribose-1-pyrophosphate (PRPP) to anthranilate to yield N-(5'-phosphoribosyl)-anthranilate (PRA). The polypeptide is Anthranilate phosphoribosyltransferase (Roseiflexus sp. (strain RS-1)).